The following is a 461-amino-acid chain: Tubulin gamma-2 chain (461 aa).

Position 142–148 (142–148 (AGGTGSG)) interacts with GTP.

This sequence belongs to the tubulin family.

It is found in the cytoplasm. It localises to the cytoskeleton. Its subcellular location is the microtubule organizing center. The protein localises to the centrosome. Its function is as follows. Tubulin is the major constituent of microtubules. The gamma chain is found at microtubule organizing centers (MTOC) such as the spindle poles or the centrosome, suggesting that it is involved in the minus-end nucleation of microtubule assembly. The chain is Tubulin gamma-2 chain from Euplotoides octocarinatus (Freshwater ciliate).